A 390-amino-acid chain; its full sequence is Formate-dependent phosphoribosylglycinamide formyltransferase (390 aa).

N(1)-(5-phospho-beta-D-ribosyl)glycinamide contacts are provided by residues 18 to 19 and glutamate 78; that span reads EL. Residues arginine 110, lysine 151, 156 to 161, 191 to 194, and glutamate 199 each bind ATP; these read SSGKGQ and EEFL. The 191-residue stretch at 115 to 305 folds into the ATP-grasp domain; the sequence is DLASKELNIK…EFELHLRAFL (191 aa). Mg(2+)-binding residues include glutamate 264 and glutamate 276. N(1)-(5-phospho-beta-D-ribosyl)glycinamide contacts are provided by residues aspartate 283, lysine 353, and 360–361; that span reads RR.

Belongs to the PurK/PurT family. As to quaternary structure, homodimer.

It carries out the reaction N(1)-(5-phospho-beta-D-ribosyl)glycinamide + formate + ATP = N(2)-formyl-N(1)-(5-phospho-beta-D-ribosyl)glycinamide + ADP + phosphate + H(+). It functions in the pathway purine metabolism; IMP biosynthesis via de novo pathway; N(2)-formyl-N(1)-(5-phospho-D-ribosyl)glycinamide from N(1)-(5-phospho-D-ribosyl)glycinamide (formate route): step 1/1. Functionally, involved in the de novo purine biosynthesis. Catalyzes the transfer of formate to 5-phospho-ribosyl-glycinamide (GAR), producing 5-phospho-ribosyl-N-formylglycinamide (FGAR). Formate is provided by PurU via hydrolysis of 10-formyl-tetrahydrofolate. This is Formate-dependent phosphoribosylglycinamide formyltransferase from Prochlorococcus marinus subsp. pastoris (strain CCMP1986 / NIES-2087 / MED4).